A 553-amino-acid chain; its full sequence is Putative transport protein YidE (553 aa).

5 helical membrane-spanning segments follow: residues Ile-4–Val-24, Gly-28–Ser-48, Phe-65–Ser-85, Leu-95–Phe-115, and Met-158–Leu-178. RCK C-terminal domains are found at residues Gln-191 to Gln-276 and Asp-279 to Asn-361. A run of 6 helical transmembrane segments spans residues Met-371–Val-391, Gly-393–Leu-413, Ile-439–Val-459, Leu-464–Leu-484, Tyr-493–Ala-513, and Leu-533–Gly-553.

This sequence belongs to the AAE transporter (TC 2.A.81) family. YidE subfamily.

It localises to the cell membrane. The protein is Putative transport protein YidE of Escherichia coli O6:H1 (strain CFT073 / ATCC 700928 / UPEC).